The primary structure comprises 261 residues: UPF0177 protein YvdC (261 aa).

Helical transmembrane passes span 15–35, 43–63, 84–104, 123–143, 197–217, and 239–259; these read WVIV…IFHL, VLSI…VLFI, LDTV…YLIA, IIIG…FAQI, YFAF…TDLY, and FYLN…IALV.

It belongs to the UPF0177 family.

The protein resides in the cell membrane. In Lactococcus lactis subsp. lactis (strain IL1403) (Streptococcus lactis), this protein is UPF0177 protein YvdC (yvdC).